Consider the following 445-residue polypeptide: Tubulin beta chain (445 aa).

Residues 1-4 carry the MREI motif motif; the sequence is MREI. Position 11 (Gln11) interacts with GTP. Ser40 bears the Phosphoserine mark. Position 58 is an N6-acetyllysine; alternate (Lys58). An N6-succinyllysine; alternate modification is found at Lys58. Lys58 is covalently cross-linked (Glycyl lysine isopeptide (Lys-Gly) (interchain with G-Cter in ubiquitin); alternate). Positions 69, 138, 142, 143, and 144 each coordinate GTP. Glu69 contributes to the Mg(2+) binding site. Ser172 carries the post-translational modification Phosphoserine; by CDK1. GTP contacts are provided by Asn204 and Asn226. Phosphothreonine occurs at positions 285 and 290. Arg318 carries the omega-N-methylarginine modification. Lys324 participates in a covalent cross-link: Glycyl lysine isopeptide (Lys-Gly) (interchain with G-Cter in ubiquitin). Residues 424–445 form a disordered region; sequence QYQDATADEQGEFEEEGEEDEA. Acidic residues predominate over residues 429–445; it reads TADEQGEFEEEGEEDEA. Glu438 bears the 5-glutamyl polyglutamate mark.

Belongs to the tubulin family. As to quaternary structure, dimer of alpha and beta chains. A typical microtubule is a hollow water-filled tube with an outer diameter of 25 nm and an inner diameter of 15 nM. Alpha-beta heterodimers associate head-to-tail to form protofilaments running lengthwise along the microtubule wall with the beta-tubulin subunit facing the microtubule plus end conferring a structural polarity. Microtubules usually have 13 protofilaments but different protofilament numbers can be found in some organisms and specialized cells. Interacts with NCKAP5L. Mg(2+) serves as cofactor. In terms of processing, some glutamate residues at the C-terminus are polyglycylated, resulting in polyglycine chains on the gamma-carboxyl group. Glycylation is mainly limited to tubulin incorporated into axonemes (cilia and flagella) whereas glutamylation is prevalent in neuronal cells, centrioles, axonemes, and the mitotic spindle. Both modifications can coexist on the same protein on adjacent residues, and lowering polyglycylation levels increases polyglutamylation, and reciprocally. Cilia and flagella glycylation is required for their stability and maintenance. Flagella glycylation controls sperm motility. Some glutamate residues at the C-terminus are polyglutamylated, resulting in polyglutamate chains on the gamma-carboxyl group. Polyglutamylation plays a key role in microtubule severing by spastin (SPAST). SPAST preferentially recognizes and acts on microtubules decorated with short polyglutamate tails: severing activity by SPAST increases as the number of glutamates per tubulin rises from one to eight, but decreases beyond this glutamylation threshold. Post-translationally, phosphorylated on Ser-172 by CDK1 during the cell cycle, from metaphase to telophase, but not in interphase. This phosphorylation inhibits tubulin incorporation into microtubules.

Its subcellular location is the cytoplasm. It is found in the cytoskeleton. Its function is as follows. Tubulin is the major constituent of microtubules, a cylinder consisting of laterally associated linear protofilaments composed of alpha- and beta-tubulin heterodimers. Microtubules grow by the addition of GTP-tubulin dimers to the microtubule end, where a stabilizing cap forms. Below the cap, tubulin dimers are in GDP-bound state, owing to GTPase activity of alpha-tubulin. This chain is Tubulin beta chain, found in Sus scrofa (Pig).